The sequence spans 577 residues: Adenine deaminase (577 aa).

It belongs to the metallo-dependent hydrolases superfamily. Adenine deaminase family. Mn(2+) serves as cofactor.

The enzyme catalyses adenine + H2O + H(+) = hypoxanthine + NH4(+). The polypeptide is Adenine deaminase (Geobacillus kaustophilus (strain HTA426)).